Here is a 162-residue protein sequence, read N- to C-terminus: Shikimate kinase (162 aa).

11–16 (GSGKSS) lines the ATP pocket. Ser15 contacts Mg(2+). 3 residues coordinate substrate: Asp33, Arg57, and Gly80. Arg116 provides a ligand contact to ATP. Arg132 is a substrate binding site.

This sequence belongs to the shikimate kinase family. Monomer. Mg(2+) serves as cofactor.

The protein localises to the cytoplasm. The enzyme catalyses shikimate + ATP = 3-phosphoshikimate + ADP + H(+). Its pathway is metabolic intermediate biosynthesis; chorismate biosynthesis; chorismate from D-erythrose 4-phosphate and phosphoenolpyruvate: step 5/7. In terms of biological role, catalyzes the specific phosphorylation of the 3-hydroxyl group of shikimic acid using ATP as a cosubstrate. The chain is Shikimate kinase from Helicobacter pylori (strain G27).